The following is a 483-amino-acid chain: Endoplasmic reticulum lectin 1 (483 aa).

An N-terminal signal peptide occupies residues 1-33; it reads MEEGDGGLRSLVPGGPLLLVLYGLLEASGGGRA. 2 MRH domains span residues 111–246 and 342–469; these read SSCS…LCSH and SYCF…ICKI. A disulfide bridge links C113 with C126. N195 is a glycosylation site (N-linked (GlcNAc...) asparagine). Intrachain disulfides connect C199–C232, C215–C244, C344–C357, C421–C455, and C436–C467.

As to quaternary structure, may form a complex with OS9, HSPA5, SYVN1, and SEL1L with which it interacts directly. Interacts (via PRKCSH 2 domain) with KREMEN2 (when glycosylated). Interacts with HSPA5. Post-translationally, N-glycosylated.

Its subcellular location is the endoplasmic reticulum lumen. Functionally, probable lectin that binds selectively to improperly folded lumenal proteins. May function in endoplasmic reticulum quality control and endoplasmic reticulum-associated degradation (ERAD) of both non-glycosylated proteins and glycoproteins. The chain is Endoplasmic reticulum lectin 1 (Erlec1) from Mus musculus (Mouse).